Consider the following 95-residue polypeptide: High mobility group nucleosome-binding domain-containing protein 3 (95 aa).

Composition is skewed to basic and acidic residues over residues 1-25 (MPKR…EPTR), 39-53 (PEPK…KEPG), and 62-72 (GKKEEKQEAGK). Residues 1–95 (MPKRKSPENA…EEVLSTNASH (95 aa)) form a disordered region. Ser6 is subject to Phosphoserine. Phosphoserine is present on Ser78.

The protein belongs to the HMGN family. As to quaternary structure, interacts with the ligand binding domain of the thyroid receptor (TR) (in vitro). Requires the presence of thyroid hormone for its interaction. Interacts with transcriptional regulator SEHBP. Interacts with nucleosomes.

The protein localises to the nucleus. Functionally, binds to nucleosomes, regulating chromatin structure and consequently, chromatin-dependent processes such as transcription, DNA replication and DNA repair. Affects both insulin and glucagon levels and modulates the expression of pancreatic genes involved in insulin secretion. Regulates the expression of the glucose transporter SLC2A2 by binding specifically to its promoter region and recruiting PDX1 and additional transcription factors. Regulates the expression of SLC6A9, a glycine transporter which regulates the glycine concentration in synaptic junctions in the central nervous system, by binding to its transcription start site. May play a role in ocular development and astrocyte function. This Rattus norvegicus (Rat) protein is High mobility group nucleosome-binding domain-containing protein 3 (Hmgn3).